Here is a 140-residue protein sequence, read N- to C-terminus: Nucleoside diphosphate kinase (140 aa).

ATP is bound by residues lysine 9, phenylalanine 57, arginine 85, threonine 91, arginine 102, and asparagine 112. Histidine 115 (pros-phosphohistidine intermediate) is an active-site residue.

It belongs to the NDK family. As to quaternary structure, homotetramer. Requires Mg(2+) as cofactor.

The protein resides in the cytoplasm. The catalysed reaction is a 2'-deoxyribonucleoside 5'-diphosphate + ATP = a 2'-deoxyribonucleoside 5'-triphosphate + ADP. It catalyses the reaction a ribonucleoside 5'-diphosphate + ATP = a ribonucleoside 5'-triphosphate + ADP. Functionally, major role in the synthesis of nucleoside triphosphates other than ATP. The ATP gamma phosphate is transferred to the NDP beta phosphate via a ping-pong mechanism, using a phosphorylated active-site intermediate. This Chlorobium luteolum (strain DSM 273 / BCRC 81028 / 2530) (Pelodictyon luteolum) protein is Nucleoside diphosphate kinase.